The following is a 99-amino-acid chain: Integration host factor subunit alpha (99 aa).

The segment at 49–75 is disordered; the sequence is FGNFDLRDKNQRPGRNPKTGEDIPITA.

Belongs to the bacterial histone-like protein family. As to quaternary structure, heterodimer of an alpha and a beta chain.

In terms of biological role, this protein is one of the two subunits of integration host factor, a specific DNA-binding protein that functions in genetic recombination as well as in transcriptional and translational control. This Salmonella arizonae (strain ATCC BAA-731 / CDC346-86 / RSK2980) protein is Integration host factor subunit alpha.